The sequence spans 298 residues: Protease HtpX homolog (298 aa).

Helical transmembrane passes span 14–34 (VVLL…AGYL) and 39–59 (YAMG…SMIF). His143 contributes to the Zn(2+) binding site. Glu144 is a catalytic residue. His147 contacts Zn(2+). 2 consecutive transmembrane segments (helical) span residues 158–178 (IAVA…RMLW) and 197–217 (IITL…ASLI). A Zn(2+)-binding site is contributed by Glu226.

Belongs to the peptidase M48B family. Requires Zn(2+) as cofactor.

It localises to the cell membrane. This chain is Protease HtpX homolog, found in Streptococcus pyogenes serotype M49 (strain NZ131).